The primary structure comprises 265 residues: Chalcone synthase (265 aa).

C40 is an active-site residue.

This sequence belongs to the thiolase-like superfamily. Chalcone/stilbene synthases family.

The enzyme catalyses (E)-4-coumaroyl-CoA + 3 malonyl-CoA + 3 H(+) = 2',4,4',6'-tetrahydroxychalcone + 3 CO2 + 4 CoA. It participates in secondary metabolite biosynthesis; flavonoid biosynthesis. In terms of biological role, the primary product of this enzyme is 4,2',4',6'-tetrahydroxychalcone (also termed naringenin-chalcone or chalcone) which can under specific conditions spontaneously isomerize into naringenin. This chain is Chalcone synthase (CHSII), found in Medicago sativa (Alfalfa).